Reading from the N-terminus, the 37-residue chain is Large ribosomal subunit protein bL36 (37 aa).

Belongs to the bacterial ribosomal protein bL36 family.

The sequence is that of Large ribosomal subunit protein bL36 from Alkaliphilus metalliredigens (strain QYMF).